The sequence spans 35 residues: Cupiennin-1c (35 aa).

Glutamic acid 1-amide is present on Glu-35.

As to expression, expressed by the venom gland.

The protein localises to the secreted. Its function is as follows. Has antimicrobial activity against E.coli, E.faecalis, P.aeruginosa, and S.aureus. This Cupiennius salei (American wandering spider) protein is Cupiennin-1c.